Consider the following 152-residue polypeptide: MNPAHLLVLSAVCVSLLGASSIPPQPLNLLQFNYMIQCTIPGSRPFLDYMDYGCYCGTGVAGHPVDELDRCCQTHDLCYSKAEEQPKCSSLLNSPLMKKYSYTCSGGTLTCNDDNDECGAFICNCDRAARICFAGAPYNKENKELDIATRCQ.

Positions 1–21 (MNPAHLLVLSAVCVSLLGASS) are cleaved as a signal peptide. A propeptide spanning residues 22 to 27 (IPPQPL) is cleaved from the precursor. Disulfide bonds link C38/C104, C54/C151, C56/C72, C71/C132, C78/C125, C88/C118, and C111/C123. Residues Y55, G57, and G59 each contribute to the Ca(2+) site. Residue H75 is part of the active site. A Ca(2+)-binding site is contributed by D76. Residue D126 is part of the active site.

It belongs to the phospholipase A2 family. Group I subfamily. D49 sub-subfamily. The cofactor is Ca(2+). Expressed by the venom gland.

The protein resides in the secreted. The catalysed reaction is a 1,2-diacyl-sn-glycero-3-phosphocholine + H2O = a 1-acyl-sn-glycero-3-phosphocholine + a fatty acid + H(+). PLA2 catalyzes the calcium-dependent hydrolysis of the 2-acyl groups in 3-sn-phosphoglycerides. This chain is Acidic phospholipase A2, found in Ophiophagus hannah (King cobra).